We begin with the raw amino-acid sequence, 295 residues long: Indole-3-glycerol phosphate synthase (295 aa).

It belongs to the TrpC family.

The enzyme catalyses 1-(2-carboxyphenylamino)-1-deoxy-D-ribulose 5-phosphate + H(+) = (1S,2R)-1-C-(indol-3-yl)glycerol 3-phosphate + CO2 + H2O. Its pathway is amino-acid biosynthesis; L-tryptophan biosynthesis; L-tryptophan from chorismate: step 4/5. The polypeptide is Indole-3-glycerol phosphate synthase (Prochlorococcus marinus (strain MIT 9515)).